Here is a 295-residue protein sequence, read N- to C-terminus: Ankyrin repeat and SOCS box protein 17 (295 aa).

Residues 146 to 176 (SGITPLFYVAQTRQSNIFKILLQYGILEREK) form an ANK repeat. The region spanning 232–295 (LGRHPIISNW…RLQNYLNLEI (64 aa)) is the SOCS box domain.

Belongs to the ankyrin SOCS box (ASB) family. In terms of tissue distribution, specifically expressed in testis. Not detected in other tissues tested.

Its pathway is protein modification; protein ubiquitination. May be a substrate-recognition component of a SCF-like ECS (Elongin-Cullin-SOCS-box protein) E3 ubiquitin-protein ligase complex which mediates the ubiquitination and subsequent proteasomal degradation of target proteins. In Homo sapiens (Human), this protein is Ankyrin repeat and SOCS box protein 17 (ASB17).